Reading from the N-terminus, the 177-residue chain is Large ribosomal subunit protein uL6 (177 aa).

The protein belongs to the universal ribosomal protein uL6 family. As to quaternary structure, part of the 50S ribosomal subunit.

In terms of biological role, this protein binds to the 23S rRNA, and is important in its secondary structure. It is located near the subunit interface in the base of the L7/L12 stalk, and near the tRNA binding site of the peptidyltransferase center. The protein is Large ribosomal subunit protein uL6 of Brucella melitensis biotype 1 (strain ATCC 23456 / CCUG 17765 / NCTC 10094 / 16M).